Reading from the N-terminus, the 588-residue chain is Adenine deaminase (588 aa).

This sequence belongs to the metallo-dependent hydrolases superfamily. Adenine deaminase family. In terms of assembly, homodimer. Mn(2+) serves as cofactor.

The enzyme catalyses adenine + H2O + H(+) = hypoxanthine + NH4(+). The protein is Adenine deaminase of Escherichia coli O9:H4 (strain HS).